The following is a 420-amino-acid chain: MSNVRYISNLTRETYALILAGGRGSRLHELTDWRAKPALYFGGKFRIIDFPLSNCINSGVRRVGVVTQYKSHSLIRHVMRGWGHFKKELGESVEILPASQRFSENWYQGTADAVFQNIDIIRHELPKYVMVLSGDHVYRMDYAGILAAHAESGADMTVSCLEVPIAEAAGAFGVIEVDDNMRILGFEEKPQRPKPSPDNPEMCLASMGNYVFNTEFLFEQLKKDSQNATSDRDFGKDIIPSIIEKHNVFAYPFKSPFPNEQAYWRDVGTLDSFWQANMELLSPTPALNLYDAKWPIWTFQEQLPPAKFVFDDDDRRGMALDSIVSSGCIISGATVRRSVLFNEVRVCSYSVVEDSVVLPDVVVLRHCKIKNAIIDRGCIIPEGTVIGYNHDHDRAKGFRVSEKGVTLVTRDMLGLPVGYE.

Residues Y107, G173, 188–189 (EK), and S206 each bind alpha-D-glucose 1-phosphate.

This sequence belongs to the bacterial/plant glucose-1-phosphate adenylyltransferase family. As to quaternary structure, homotetramer.

The enzyme catalyses alpha-D-glucose 1-phosphate + ATP + H(+) = ADP-alpha-D-glucose + diphosphate. Its pathway is glycan biosynthesis; glycogen biosynthesis. In terms of biological role, involved in the biosynthesis of ADP-glucose, a building block required for the elongation reactions to produce glycogen. Catalyzes the reaction between ATP and alpha-D-glucose 1-phosphate (G1P) to produce pyrophosphate and ADP-Glc. The polypeptide is Glucose-1-phosphate adenylyltransferase (Shewanella sp. (strain W3-18-1)).